The following is a 260-amino-acid chain: Ditrans,polycis-undecaprenyl-diphosphate synthase ((2E,6E)-farnesyl-diphosphate specific) (260 aa).

D20 is an active-site residue. D20 is a binding site for Mg(2+). Substrate is bound by residues 21-24 (GNGR), W25, R33, H37, and 65-67 (SSE). The active-site Proton acceptor is N68. 3 residues coordinate substrate: W69, R71, and R188. Residue H193 coordinates Mg(2+). 194–196 (RIS) contacts substrate. E207 contacts Mg(2+).

This sequence belongs to the UPP synthase family. Homodimer. The cofactor is Mg(2+).

It catalyses the reaction 8 isopentenyl diphosphate + (2E,6E)-farnesyl diphosphate = di-trans,octa-cis-undecaprenyl diphosphate + 8 diphosphate. In terms of biological role, catalyzes the sequential condensation of isopentenyl diphosphate (IPP) with (2E,6E)-farnesyl diphosphate (E,E-FPP) to yield (2Z,6Z,10Z,14Z,18Z,22Z,26Z,30Z,34E,38E)-undecaprenyl diphosphate (di-trans,octa-cis-UPP). UPP is the precursor of glycosyl carrier lipid in the biosynthesis of bacterial cell wall polysaccharide components such as peptidoglycan and lipopolysaccharide. This Wigglesworthia glossinidia brevipalpis protein is Ditrans,polycis-undecaprenyl-diphosphate synthase ((2E,6E)-farnesyl-diphosphate specific).